A 554-amino-acid polypeptide reads, in one-letter code: Polyamine aminopropyltransferase 2 (554 aa).

A compositionally biased stretch (pro residues) spans 1–13 (MIEPHAPAPPGSP). Residues 1–20 (MIEPHAPAPPGSPPSWGGPC) are disordered. 6 consecutive transmembrane segments (helical) span residues 37–57 (FLVL…ELEL), 69–89 (VTQA…GSLA), 106–126 (AALA…FAWT), 139–159 (ILLV…VPLL), 184–204 (VGAL…LGQL), and 206–226 (GALL…LGLF). The segment at 235–516 (RWLLLTANAV…RTAPAPRLDP (282 aa)) is spermidine synthase. Residues 247-492 (ALLATATVLA…SVPGPRRAAA (246 aa)) enclose the PABS domain. Residue glutamine 281 participates in S-methyl-5'-thioadenosine binding. Residues histidine 313 and aspartate 335 each coordinate spermidine. Residues glutamate 355 and 389–390 (DA) contribute to the S-methyl-5'-thioadenosine site. Residue aspartate 408 is the Proton acceptor of the active site. The tract at residues 476–495 (DTGPGPGSVPGPRRAAAGPP) is disordered. The span at 485 to 495 (PGPRRAAAGPP) shows a compositional bias: low complexity.

This sequence belongs to the spermidine/spermine synthase family. As to quaternary structure, homodimer or homotetramer.

The protein localises to the cell membrane. The catalysed reaction is S-adenosyl 3-(methylsulfanyl)propylamine + putrescine = S-methyl-5'-thioadenosine + spermidine + H(+). Its pathway is amine and polyamine biosynthesis; spermidine biosynthesis; spermidine from putrescine: step 1/1. In terms of biological role, catalyzes the irreversible transfer of a propylamine group from the amino donor S-adenosylmethioninamine (decarboxy-AdoMet) to putrescine (1,4-diaminobutane) to yield spermidine. In Streptomyces coelicolor (strain ATCC BAA-471 / A3(2) / M145), this protein is Polyamine aminopropyltransferase 2.